Here is a 132-residue protein sequence, read N- to C-terminus: Seminal vesicle protein SVP-2 (132 aa).

The first 14 residues, 1–14, serve as a signal peptide directing secretion; it reads HLALLLILENQASG. Residues 33–81 show a composition bias toward basic and acidic residues; that stretch reads HKEEVEESESSRGQDFDKRRFWEKDDPTGEHVSVRHEHLEKSHIRFKED. Disordered stretches follow at residues 33–104 and 113–132; these read HKEE…LKRH and VEDQ…MQRV. The propeptide occupies 104 to 132; that stretch reads HDAMEELVSVEDQALANGADPGKSNMQRV.

It to the SVP-1/-3/-4 precursor, particularly in regions where protein processing must occur.

It is found in the secreted. The sequence is that of Seminal vesicle protein SVP-2 from Cavia porcellus (Guinea pig).